Consider the following 396-residue polypeptide: Alanine racemase (396 aa).

Lysine 46 acts as the Proton acceptor; specific for D-alanine in catalysis. Lysine 46 carries the post-translational modification N6-(pyridoxal phosphate)lysine. Arginine 145 serves as a coordination point for substrate. Tyrosine 280 serves as the catalytic Proton acceptor; specific for L-alanine. Residue methionine 328 participates in substrate binding.

This sequence belongs to the alanine racemase family. Requires pyridoxal 5'-phosphate as cofactor.

The enzyme catalyses L-alanine = D-alanine. It functions in the pathway amino-acid biosynthesis; D-alanine biosynthesis; D-alanine from L-alanine: step 1/1. Functionally, catalyzes the interconversion of L-alanine and D-alanine. May also act on other amino acids. The protein is Alanine racemase (alr) of Brucella abortus (strain 2308).